The primary structure comprises 322 residues: MKRIGVFTSGGDAPGMNAAIRAVVRQAHALGVEVIGIRRGYAGMIQGEMVPLGVRDVANIIQRGGTILLTARSQEFLTEEGRAKAYAKLQAAGIEGLVAIGGDGTFRGALCLVEEHGMPVVGVPGTIDNDLYGTDYTIGFDTAVNTALEAIDRIRDTAASHERVFFIEVMGRHAGFIALDVGLAGGAEVIAVPEEPVDPKAVAEVLEASQRRGKKSSIVVVAEGAYPGGAAGLLAAIREHLQVEARVTVLGHIQRGGSPTAKDRILASRLGAAAVEALVGGASGVMVGEVEGEVDLTPLKEAVERRKDINRALLRLSQVLAL.

Glycine 11 contacts ATP. ADP is bound at residue 21–25; sequence RAVVR. ATP contacts are provided by residues 72–73 and 102–105; these read RS and GDGT. Aspartate 103 provides a ligand contact to Mg(2+). 126–128 provides a ligand contact to substrate; that stretch reads TID. Aspartate 128 serves as the catalytic Proton acceptor. Arginine 155 contacts ADP. Substrate-binding positions include arginine 163 and 170–172; that span reads MGR. Residues 186–188, arginine 212, and 214–216 each bind ADP; these read GAE and KKS. Substrate is bound by residues glutamate 223, arginine 246, and 252–255; that span reads HIQR.

This sequence belongs to the phosphofructokinase type A (PFKA) family. ATP-dependent PFK group I subfamily. Prokaryotic clade 'B1' sub-subfamily. As to quaternary structure, homotetramer. The cofactor is Mg(2+).

Its subcellular location is the cytoplasm. It catalyses the reaction beta-D-fructose 6-phosphate + ATP = beta-D-fructose 1,6-bisphosphate + ADP + H(+). Its pathway is carbohydrate degradation; glycolysis; D-glyceraldehyde 3-phosphate and glycerone phosphate from D-glucose: step 3/4. With respect to regulation, allosterically activated by ADP and other diphosphonucleosides. Allosterically inhibited by phosphoenolpyruvate which induces the dissociation of the active tetramer into an inactive two-subunit forms. Its function is as follows. Catalyzes the phosphorylation of D-fructose 6-phosphate to fructose 1,6-bisphosphate by ATP, the first committing step of glycolysis. In Thermus thermophilus (strain ATCC 27634 / DSM 579 / HB8), this protein is ATP-dependent 6-phosphofructokinase 1.